Consider the following 165-residue polypeptide: Deoxyuridine 5'-triphosphate nucleotidohydrolase (165 aa).

This sequence belongs to the dUTPase family. As to quaternary structure, homotrimer. Requires Mg(2+) as cofactor.

The protein resides in the host cytoplasm. The protein localises to the virion. It catalyses the reaction dUTP + H2O = dUMP + diphosphate + H(+). Functionally, the viral dUTPase may play a role in lowering the dUTP concentration in natural infections to minimize misincorporation of deoxyuridine into the viral DNA and ensure the fidelity of genome replication. This African swine fever virus (isolate Tick/South Africa/Pretoriuskop Pr4/1996) (ASFV) protein is Deoxyuridine 5'-triphosphate nucleotidohydrolase.